We begin with the raw amino-acid sequence, 430 residues long: Probable FAD-dependent monooxygenase (430 aa).

The N-terminal stretch at 1–23 (MGSTSTPPHVLIIGAGITGLALA) is a signal peptide. 9–37 (HVLIIGAGITGLALAQALRKHGVSFAVYE) lines the FAD pocket. Residues asparagine 130 and asparagine 151 are each glycosylated (N-linked (GlcNAc...) asparagine). Position 307–330 (307–330 (LEDWPTPPKGSWSNLGGTATLVGD)) interacts with FAD.

It depends on FAD as a cofactor.

This Arthroderma benhamiae (strain ATCC MYA-4681 / CBS 112371) (Trichophyton mentagrophytes) protein is Probable FAD-dependent monooxygenase.